The following is a 310-amino-acid chain: Thioredoxin reductase (310 aa).

An FAD-binding site is contributed by 34–41 (NGMQPGGQ). The cysteines at positions 135 and 138 are disulfide-linked. 281-290 (DVQDKIYRQA) is an FAD binding site.

It belongs to the class-II pyridine nucleotide-disulfide oxidoreductase family. In terms of assembly, homodimer. FAD serves as cofactor.

It is found in the cytoplasm. The enzyme catalyses [thioredoxin]-dithiol + NADP(+) = [thioredoxin]-disulfide + NADPH + H(+). The polypeptide is Thioredoxin reductase (trxB) (Rickettsia conorii (strain ATCC VR-613 / Malish 7)).